A 1285-amino-acid polypeptide reads, in one-letter code: Transmembrane channel-like protein 1 (1285 aa).

Residues 1–29 are disordered; that stretch reads MQEAARRASLRKEHTPTNEKFGDLSKQDS. Residues 1–164 lie on the Cytoplasmic side of the membrane; it reads MQEAARRASL…KIKRIESHFG (164 aa). A helical transmembrane segment spans residues 165–202; that stretch reads SVVSSYFTFLRWIVFVNIMITLIALVFVVLPETLADSV. At 203–260 the chain is on the extracellular side; it reads ANEGRFNRTKTRKQIPANERVHADELAVVWHYDGYLRYSPLFYGYYSDDPFLGNKIKY. Asn209 carries an N-linked (GalNAc...) asparagine glycan. A helical transmembrane segment spans residues 261-292; that stretch reads ALPLAYFMVTLTIFAYSFFAILRKMAANARMS. Residues 293–349 lie on the Cytoplasmic side of the membrane; sequence KLSGSKAEQYIFNWKLFTGWDYTIGNSETASNTVMAVVIKLRESIADIKKDAHGKFR. The chain crosses the membrane as a helical span at residues 350–381; it reads LLQFSLRVFANIIICAMLGFSIYCIIFAVQKS. The Extracellular portion of the chain corresponds to 382-388; sequence QVQDDGN. Residues 389–416 traverse the membrane as a helical segment; sequence LFTKNQVPSVVSTITHVFPMIFDLIGKM. The Cytoplasmic portion of the chain corresponds to 417-420; it reads ENYH. A helical membrane pass occupies residues 421-455; it reads PRTALRAHLGRVLILYTVNYITLIFALFEKMTALR. Over 456–667 the chain is Extracellular; sequence DRVNSTSTSS…NHDGHNNDIC (212 aa). The interval 458 to 488 is disordered; sequence VNSTSTSSSHRTKRQQGGWNPNMQRPPPYAS. Cys667 and Cys816 are disulfide-bonded. A helical transmembrane segment spans residues 668-705; the sequence is WETIIGQEIVKLVTMDLIFTILSILVIDLFRGLWIKYC. Positions 696 to 720 are required for interaction with tmie; sequence LFRGLWIKYCSSWWCWDIETTFPEY. Residues 706–724 are Cytoplasmic-facing; the sequence is SSWWCWDIETTFPEYGEFK. A helical membrane pass occupies residues 725-745; that stretch reads VAENVLHIINNQGMIWLGLFF. Over 746–748 the chain is Extracellular; the sequence is APL. A helical membrane pass occupies residues 749-771; the sequence is LPAINNIKLIILMYIRGWAVMTC. A required for interaction with tmie region spans residues 766–773; it reads WAVMTCNV. Topologically, residues 772–785 are cytoplasmic; it reads NVPAREIFRASRSS. Residues 786–809 traverse the membrane as a helical segment; the sequence is NFYLGILLIWLLLCTLPVGFVIAS. The Extracellular portion of the chain corresponds to 810–852; it reads MSPSRSCGPFARYQHFYTVVTREIEKRVDQTVLSYIRHIASPG. A helical membrane pass occupies residues 853–886; the sequence is VVIPIILFLILIIYFLFSLVRGLREANTDLQAQL. Topologically, residues 887–1285 are cytoplasmic; the sequence is VHERTEEKKK…DEDDSPRQID (399 aa). Disordered stretches follow at residues 940-962 and 1114-1285; these read ADHA…DDER and TIKE…RQID. The span at 948-961 shows a compositional bias: acidic residues; the sequence is SSEESDINEDEDDE. Basic and acidic residues-rich tracts occupy residues 1121–1131, 1146–1156, and 1167–1182; these read DPGKSDKKQTS, DEARALREKMK, and TVEE…ESEF. Residues 1197-1208 show a composition bias toward acidic residues; that stretch reads TEEENEEEETDS.

The protein belongs to the TMC family. In terms of assembly, homodimer. Interacts with calm-1 and tmie to form the MET channel. As to expression, expressed in the ASH polymodal avoidance neurons. Also expressed in other sensory neurons, including the ADF, ASE, ADL, AQR, PQR, URX and PHA cells.

It is found in the cell membrane. The enzyme catalyses Na(+)(in) = Na(+)(out). The catalysed reaction is Ca(2+)(in) = Ca(2+)(out). It catalyses the reaction K(+)(in) = K(+)(out). Pore-forming subunit of the mechanotransducer (MET) non-selective cation channel complex. The MET complex is composed of symmetric dimeric MET channels, each channel comprising two copies of pore-forming ion-conducting transmembrane TMC subunits and auxiliary proteins including the transmembrane inner ear protein/tmie, the calcium-binding protein/calm-1 and arrestin domain protein arrd-6. Sodium ions are the most permeable, whereas calcium and potassium have lower indices. Sodium-sensor ion channel that acts specifically in salt taste chemosensation. Required for salt-evoked neuronal activity and behavioral avoidance of high concentrations of NaCl. This is Transmembrane channel-like protein 1 (tmc-1) from Caenorhabditis elegans.